A 349-amino-acid chain; its full sequence is MAATAAEAVASGSGEPREEAGALGPAWDESQLRSYSFPTRPIPRLSQSDPRAEELIENEEPVVLTDTNLVYPALKWDLEYLQENIGNGDFSVYSASTHKFLYYDEKKMANFQNFKPRSNREEMKFHEFVEKLQDIQQRGGEERLYLQQTLNDTVGRKIVMDFLGFNWNWINKQQGKRGWGQLTSNLLLIGMEGNVTPAHYDEQQNFFAQIKGYKRCILFPPDQFECLYPYPVHHPCDRQSQVDFDNPDYERFPNFQNVVGYETVVGPGDVLYIPMYWWHHIESLLNGGITITVNFWYKGAPTPKRIEYPLKAHQKVAIMRNIEKMLGEALGNPQEVGPLLNTMIKGRYN.

A compositionally biased stretch (low complexity) spans 1–10 (MAATAAEAVA). Residues 1–51 (MAATAAEAVASGSGEPREEAGALGPAWDESQLRSYSFPTRPIPRLSQSDPR) are disordered. Position 2 is an N-acetylalanine (Ala2). Residues 2-125 (AATAAEAVAS…PRSNREEMKF (124 aa)) form an interaction with VHL region. Positions 142-312 (ERLYLQQTLN…PKRIEYPLKA (171 aa)) constitute a JmjC domain. Residue Tyr145 coordinates 2-oxoglutarate. Substrate contacts are provided by residues Asp152 and 181–183 (QLT). Thr196 serves as a coordination point for 2-oxoglutarate. The Fe cation site is built by His199 and Asp201. 201 to 203 (DEQ) is a binding site for substrate. Residues Asn205 and Lys214 each contribute to the 2-oxoglutarate site. 238 to 239 (RQ) is a binding site for substrate. Position 279 (His279) interacts with Fe cation. Residue Asn294 participates in 2-oxoglutarate binding. Ala300 and Asn321 together coordinate substrate.

In terms of assembly, homodimer; homodimerization is essential for catalytic activity. Interacts with VHL and HIF1A. Part of a complex with VHL, HIF1A and HDAC1 or HDAC2 or HDAC3. Interacts with NFKB1 and NFKBIA. Interacts with NOTCH1, NOTCH2 and NOTCH3 but not with NOTCH4. Interacts with APBA3; binding inhibits HIF1AN binding to HIF1A. Interacts with TNKS2. Interacts with PPP1R12A. Interacts with ASB4. Interacts with UBE3A. Interacts with ANKS3. Interacts with NECAB3; the interaction is indirect and seems to be mediated by APBA3. The cofactor is Fe(2+).

It is found in the nucleus. It localises to the cytoplasm. The protein resides in the perinuclear region. The catalysed reaction is L-asparaginyl-[hypoxia-inducible factor alpha subunit] + 2-oxoglutarate + O2 = (3S)-3-hydroxy-L-asparaginyl-[hypoxia-inducible factor alpha subunit] + succinate + CO2. It catalyses the reaction L-histidyl-[ankyrin-repeat domain protein] + 2-oxoglutarate + O2 = (3S)-3-hydroxy-L-histidyl-[ankyrin-repeat domain protein] + succinate + CO2. The enzyme catalyses L-asparaginyl-[ankyrin-repeat domain protein] + 2-oxoglutarate + O2 = (3S)-3-hydroxy-L-asparaginyl-[ankyrin-repeat domain protein] + succinate + CO2. It carries out the reaction L-aspartyl-[ankyrin-repeat domain protein] + 2-oxoglutarate + O2 = (3S)-3-hydroxy-L-aspartyl-[ankyrin-repeat domain protein] + succinate + CO2. Its function is as follows. Hydroxylates HIF-1 alpha at 'Asn-803' in the C-terminal transactivation domain (CAD). Functions as an oxygen sensor and, under normoxic conditions, the hydroxylation prevents interaction of HIF-1 with transcriptional coactivators including Cbp/p300-interacting transactivator. Involved in transcriptional repression through interaction with HIF1A, VHL and histone deacetylases. Hydroxylates specific Asn residues within ankyrin repeat domains (ARD) of NFKB1, NFKBIA, NOTCH1, ASB4, PPP1R12A and several other ARD-containing proteins. Also hydroxylates Asp and His residues within ARDs of ANK1 and TNKS2, respectively. Negatively regulates NOTCH1 activity, accelerating myogenic differentiation. Positively regulates ASB4 activity, promoting vascular differentiation. This Homo sapiens (Human) protein is Hypoxia-inducible factor 1-alpha inhibitor (HIF1AN).